Consider the following 476-residue polypeptide: uncharacterized protein (476 aa).

The first 24 residues, 1–24 (MIRKSATGVIVALAVIWGGGTWYT), serve as a signal peptide directing secretion.

The protein to E.coli YdgA and H.influenzae HI_1236.

This is an uncharacterized protein from Escherichia coli (strain K12).